A 298-amino-acid chain; its full sequence is Syntaxin-4 (298 aa).

Residues 1–274 lie on the Cytoplasmic side of the membrane; the sequence is MRDRTHELRQ…NQKKARKKKV (274 aa). Phosphoserine occurs at positions 15, 29, 35, 36, 117, 208, and 248. Residues 38–163 are a coiled coil; the sequence is DDEFFQKVQT…ERIRRQLKIT (126 aa). An interaction with CENPF region spans residues 154–298; that stretch reads ERIRRQLKIT…VIIGITITVG (145 aa). Residues 200 to 262 enclose the t-SNARE coiled-coil homology domain; the sequence is LNEISARHSE…ERGQEHVKIA (63 aa). Residues 275–295 form a helical; Anchor for type IV membrane protein membrane-spanning segment; the sequence is MIAICVSVTVLILAVIIGITI. Over 296-298 the chain is Extracellular; that stretch reads TVG.

It belongs to the syntaxin family. As to quaternary structure, found in a complex with VAMP8 and SNAP23. Detected in a complex with SNAP23 and STXBP4. Interacts with SNAP23 and SNAPIN. Interacts with VAMP2. Interacts with LLGL1. Interacts (via C-terminus) with CENPF. Interacts with DOC2B. Interacts with STXBP3; excludes interaction with DOC2B and SNAP25. Interacts with STXBP4; excludes interaction with VAMP2. Component of the SNARE complex composed of STX4, SNAP23 and VAMP7 that interacts with SYT7 during lysosomal exocytosis. Interacts with STXBP6. Interacts with STXBP5L. In terms of tissue distribution, expressed in all tissues tested including adipose, brain, testis, intestine, liver, heart, spleen, skeletal muscle and kidney.

Its subcellular location is the cell membrane. It is found in the cell projection. The protein resides in the neuron projection. The protein localises to the stereocilium. Functionally, plasma membrane t-SNARE that mediates docking of transport vesicles. Necessary for the translocation of SLC2A4 from intracellular vesicles to the plasma membrane. In neurons, recruited at neurite tips to membrane domains rich in the phospholipid 1-oleoyl-2-palmitoyl-PC (OPPC) which promotes neurite tip surface expression of the dopamine transporter SLC6A3/DAT by facilitating fusion of SLC6A3-containing transport vesicles with the plasma membrane. Together with STXB3 and VAMP2, may also play a role in docking/fusion of intracellular GLUT4-containing vesicles with the cell surface in adipocytes and in docking of synaptic vesicles at presynaptic active zones. Required for normal hearing. In Rattus norvegicus (Rat), this protein is Syntaxin-4 (Stx4).